A 500-amino-acid polypeptide reads, in one-letter code: Lysine--tRNA ligase (500 aa).

Mg(2+)-binding residues include E410 and E417.

The protein belongs to the class-II aminoacyl-tRNA synthetase family. Homodimer. Mg(2+) serves as cofactor.

It is found in the cytoplasm. The enzyme catalyses tRNA(Lys) + L-lysine + ATP = L-lysyl-tRNA(Lys) + AMP + diphosphate. In Mycoplasma mycoides subsp. mycoides SC (strain CCUG 32753 / NCTC 10114 / PG1), this protein is Lysine--tRNA ligase.